Here is a 603-residue protein sequence, read N- to C-terminus: Threonine--tRNA ligase (603 aa).

The segment at 197 to 499 is catalytic; that stretch reads DHRKLGKELG…LIEEYAGDFP (303 aa). Residues Cys296, His347, and His476 each coordinate Zn(2+).

It belongs to the class-II aminoacyl-tRNA synthetase family. As to quaternary structure, homodimer. Zn(2+) is required as a cofactor.

It is found in the cytoplasm. The catalysed reaction is tRNA(Thr) + L-threonine + ATP = L-threonyl-tRNA(Thr) + AMP + diphosphate + H(+). Functionally, catalyzes the attachment of threonine to tRNA(Thr) in a two-step reaction: L-threonine is first activated by ATP to form Thr-AMP and then transferred to the acceptor end of tRNA(Thr). Also edits incorrectly charged L-seryl-tRNA(Thr). The sequence is that of Threonine--tRNA ligase from Synechocystis sp. (strain ATCC 27184 / PCC 6803 / Kazusa).